A 72-amino-acid polypeptide reads, in one-letter code: Translation initiation factor IF-1 2 (72 aa).

One can recognise an S1-like domain in the interval 1–72 (MAKEDVIEMQ…TKGRIVFRTK (72 aa)).

This sequence belongs to the IF-1 family. Component of the 30S ribosomal translation pre-initiation complex which assembles on the 30S ribosome in the order IF-2 and IF-3, IF-1 and N-formylmethionyl-tRNA(fMet); mRNA recruitment can occur at any time during PIC assembly.

It is found in the cytoplasm. In terms of biological role, one of the essential components for the initiation of protein synthesis. Stabilizes the binding of IF-2 and IF-3 on the 30S subunit to which N-formylmethionyl-tRNA(fMet) subsequently binds. Helps modulate mRNA selection, yielding the 30S pre-initiation complex (PIC). Upon addition of the 50S ribosomal subunit IF-1, IF-2 and IF-3 are released leaving the mature 70S translation initiation complex. The sequence is that of Translation initiation factor IF-1 2 from Azoarcus sp. (strain BH72).